The sequence spans 205 residues: MSRKRDKPYTNRHTPARISKRRRPWAPSSSEHDEIIDKPITKPPPPPALVVMGLPANCSVLELKSRFEIYGSISRIRIHKDGIGSVSYRTAESAEAAIAGSHEPSFGISIDSKKLEVVWATDPLVKWKEGVTAGEGKERTSSFSSKLLRPVMPLRKHGRSSRLASAIVNPRSDNTKGISGDGGISSPATTSEVKQRNIVTYDDIV.

Positions 1–42 are disordered; it reads MSRKRDKPYTNRHTPARISKRRRPWAPSSSEHDEIIDKPITK. The span at 14-24 shows a compositional bias: basic residues; that stretch reads TPARISKRRRP. The segment covering 30–40 has biased composition (basic and acidic residues); it reads SEHDEIIDKPI. One can recognise an RRM domain in the interval 47-122; the sequence is PALVVMGLPA…KKLEVVWATD (76 aa). The tract at residues 170–191 is disordered; the sequence is PRSDNTKGISGDGGISSPATTS.

This is an uncharacterized protein from Arabidopsis thaliana (Mouse-ear cress).